The chain runs to 483 residues: Probable zinc metalloprotease PTRG_04977 (483 aa).

An N-terminal signal peptide occupies residues 1–18; that stretch reads MLFRSALLSNVLLLPACA. N-linked (GlcNAc...) asparagine glycosylation is found at Asn96 and Asn121. Zn(2+)-binding residues include His167, Asp187, and Glu220. A glycan (N-linked (GlcNAc...) asparagine) is linked at Asn235. Asp247 contributes to the Zn(2+) binding site. Asn310, Asn362, Asn401, Asn411, and Asn421 each carry an N-linked (GlcNAc...) asparagine glycan. Positions 396-483 constitute a Fibronectin type-III domain; it reads PAMPRNVTID…KSPAVYPFPG (88 aa).

Belongs to the peptidase M28 family. M28B subfamily. Zn(2+) serves as cofactor.

The protein resides in the secreted. The polypeptide is Probable zinc metalloprotease PTRG_04977 (Pyrenophora tritici-repentis (strain Pt-1C-BFP) (Wheat tan spot fungus)).